Consider the following 148-residue polypeptide: uncharacterized protein (148 aa).

Residues 65-79 (VDSTPSVDSTGSTSD) are compositionally biased toward low complexity. Positions 65 to 85 (VDSTPSVDSTGSTSDVVDDRG) are disordered.

This is an uncharacterized protein from Saccharomyces cerevisiae (strain ATCC 204508 / S288c) (Baker's yeast).